Consider the following 404-residue polypeptide: Cysteine desulfurase IscS (404 aa).

Pyridoxal 5'-phosphate contacts are provided by residues 75-76 (AT), N155, Q183, and 203-205 (SAH). K206 carries the N6-(pyridoxal phosphate)lysine modification. Position 243 (T243) interacts with pyridoxal 5'-phosphate. Catalysis depends on C328, which acts as the Cysteine persulfide intermediate. C328 provides a ligand contact to [2Fe-2S] cluster.

The protein belongs to the class-V pyridoxal-phosphate-dependent aminotransferase family. NifS/IscS subfamily. Homodimer. Forms a heterotetramer with IscU, interacts with other sulfur acceptors. Requires pyridoxal 5'-phosphate as cofactor.

It is found in the cytoplasm. It catalyses the reaction (sulfur carrier)-H + L-cysteine = (sulfur carrier)-SH + L-alanine. It participates in cofactor biosynthesis; iron-sulfur cluster biosynthesis. Functionally, master enzyme that delivers sulfur to a number of partners involved in Fe-S cluster assembly, tRNA modification or cofactor biosynthesis. Catalyzes the removal of elemental sulfur atoms from cysteine to produce alanine. Functions as a sulfur delivery protein for Fe-S cluster synthesis onto IscU, an Fe-S scaffold assembly protein, as well as other S acceptor proteins. The polypeptide is Cysteine desulfurase IscS (Aeromonas hydrophila subsp. hydrophila (strain ATCC 7966 / DSM 30187 / BCRC 13018 / CCUG 14551 / JCM 1027 / KCTC 2358 / NCIMB 9240 / NCTC 8049)).